We begin with the raw amino-acid sequence, 107 residues long: U20-lycotoxin-Ls1b (107 aa).

The signal sequence occupies residues 1 to 30 (MFSTSDQVSKMNSRILSALLILGIATCVIA). A WAP domain is found at 31-76 (GGFCPKSRHPQCNLSYKINDCCAQSDCRVGSVCCVEGCGNVCRAES). Cystine bridges form between cysteine 34–cysteine 64, cysteine 42–cysteine 68, cysteine 51–cysteine 63, cysteine 52–cysteine 90, and cysteine 57–cysteine 72.

It belongs to the venom protein 11 family. 02 (wap-2) subfamily. Contains 5 disulfide bonds. In terms of tissue distribution, expressed by the venom gland.

Its subcellular location is the secreted. Its function is as follows. Has antibacterial activity. This chain is U20-lycotoxin-Ls1b, found in Lycosa singoriensis (Wolf spider).